The sequence spans 127 residues: Glycine cleavage system H protein (127 aa).

A Lipoyl-binding domain is found at 22 to 104 (TVRIGITDFA…YDKAWMIVIE (83 aa)). Lys63 is modified (N6-lipoyllysine).

This sequence belongs to the GcvH family. In terms of assembly, the glycine cleavage system is composed of four proteins: P, T, L and H. The cofactor is (R)-lipoate.

Its function is as follows. The glycine cleavage system catalyzes the degradation of glycine. The H protein shuttles the methylamine group of glycine from the P protein to the T protein. Functionally, is also involved in protein lipoylation via its role as an octanoyl/lipoyl carrier protein intermediate. The sequence is that of Glycine cleavage system H protein from Anoxybacillus flavithermus (strain DSM 21510 / WK1).